Here is a 520-residue protein sequence, read N- to C-terminus: Bile acid--coenzyme A ligase (520 aa).

The protein belongs to the ATP-dependent AMP-binding enzyme family. In terms of assembly, homodimer. Mg(2+) is required as a cofactor.

The enzyme catalyses cholate + ATP + CoA = choloyl-CoA + AMP + diphosphate. It catalyses the reaction deoxycholate + ATP + CoA = deoxycholoyl-CoA + AMP + diphosphate. The catalysed reaction is chenodeoxycholate + ATP + CoA = chenodeoxycholoyl-CoA + AMP + diphosphate. Its pathway is lipid metabolism; bile acid biosynthesis. Its activity is regulated as follows. Inhibited by diphosphate. In terms of biological role, functions in the bile acid 7alpha-dehydroxylation pathway, which forms secondary bile acids via the 7alpha-dehydroxylation of primary bile acids, and is carried out by intestinal anaerobic bacteria. Catalyzes the initial step in this pathway, i.e. the ATP-dependent thioesterification of primary bile acids with coenzyme A. Is active with C-24 bile acids with free carboxyl groups such as cholate, deoxycholate and chenodeoxycholate. Produces AMP and pyrophosphate in addition to the bile acid-CoA thioester. The chain is Bile acid--coenzyme A ligase from Clostridium scindens (strain JCM 10418 / VPI 12708).